The chain runs to 378 residues: Alcohol dehydrogenase class-3 (378 aa).

An N-acetylalanine modification is found at A1. C46 contributes to the Zn(2+) binding site. H47 is a binding site for NAD(+). 2 residues coordinate an alcohol: T48 and H68. Zn(2+) is bound by residues H68, E69, C98, C101, C104, C112, and C176. NAD(+)-binding positions include 201-206, D225, K230, 294-296, 319-321, and R371; these read GLGTVG, VGV, and TAF.

This sequence belongs to the zinc-containing alcohol dehydrogenase family. Class-III subfamily. In terms of assembly, homodimer. It depends on Zn(2+) as a cofactor.

It is found in the cytoplasm. The enzyme catalyses a primary alcohol + NAD(+) = an aldehyde + NADH + H(+). The catalysed reaction is a secondary alcohol + NAD(+) = a ketone + NADH + H(+). It catalyses the reaction S-(hydroxymethyl)glutathione + NADP(+) = S-formylglutathione + NADPH + H(+). It carries out the reaction S-(hydroxymethyl)glutathione + NAD(+) = S-formylglutathione + NADH + H(+). Functionally, class-III ADH is remarkably ineffective in oxidizing ethanol, but it readily catalyzes the oxidation of long-chain primary alcohols and the oxidation of S-(hydroxymethyl) glutathione. In Pisum sativum (Garden pea), this protein is Alcohol dehydrogenase class-3.